A 174-amino-acid chain; its full sequence is WAP four-disulfide core domain protein 2 (174 aa).

Positions 1-25 (MPACRLCLLAAGLLLGLLLFTPISA) are cleaved as a signal peptide. The region spanning 29–74 (DAEKPGECPQLEPITDCVLECTLDKDCADNRKCCQAGCSSVCSKPN) is the WAP 1 domain. 4 disulfide bridges follow: cysteine 36–cysteine 62, cysteine 45–cysteine 66, cysteine 49–cysteine 61, and cysteine 55–cysteine 70. The disordered stretch occupies residues 68–117 (SVCSKPNGPSEGELSGTDTKLSETGTTTQSAGLDHTTKPPGGQVSTKPPA). Over residues 83–98 (GTDTKLSETGTTTQSA) the composition is skewed to polar residues. Positions 125-173 (VREKQGTCPSVDIPKLGLCEDQCQVDSQCSGNMKCCRNGCGKMACTTPK) constitute a WAP 2 domain. 4 disulfide bridges follow: cysteine 132/cysteine 160, cysteine 143/cysteine 164, cysteine 147/cysteine 159, and cysteine 153/cysteine 169.

Homotrimer; disulfide-linked.

It localises to the secreted. In terms of biological role, broad range protease inhibitor. The protein is WAP four-disulfide core domain protein 2 (Wfdc2) of Mus musculus (Mouse).